We begin with the raw amino-acid sequence, 499 residues long: Neuronal acetylcholine receptor subunit alpha-3 (499 aa).

The N-terminal stretch at 1-25 (MGVVLPPPPLSMLMLVLMLLPVASA) is a signal peptide. Over 26–244 (SEAEHRLFQY…PLFYTINLII (219 aa)) the chain is Extracellular. 2 N-linked (GlcNAc...) asparagine glycosylation sites follow: N49 and N166. Cystine bridges form between C153/C167 and C217/C218. The helical transmembrane segment at 245–260 (PCLLISFLTVLVFYLP) threads the bilayer. Residues 261-262 (SD) lie on the Cytoplasmic side of the membrane. A helical membrane pass occupies residues 263–279 (CGEKVTLCISVLLSLTV). E265 provides a ligand contact to Na(+). The Extracellular segment spans residues 280 to 301 (FLLVITETIPSTSLVIPLIGEY). Residues 302–320 (LLFTMIFVTLSIVITVFVL) form a helical membrane-spanning segment. Topologically, residues 321–468 (NVHYRTPTTH…QDDWKYVAMV (148 aa)) are cytoplasmic. Phosphoserine occurs at positions 407 and 410. Residues 469–487 (IDRIFLWVFILVCILGTAG) traverse the membrane as a helical segment. The Extracellular segment spans residues 488–499 (LFLQPLMARDDT).

The protein belongs to the ligand-gated ion channel (TC 1.A.9) family. Acetylcholine receptor (TC 1.A.9.1) subfamily. Alpha-3/CHRNA3 sub-subfamily. As to quaternary structure, neuronal AChR is composed of two different types of subunits: alpha and beta. CHRNA3/Alpha-3 subunit can be combined to CHRNB2/beta-2 or CHRNB4/beta-4 to give rise to functional receptors. Part of a complex composed of STUB1/CHIP, VCP/p97, CHRNA3, and UBXN2A that modulates the ubiquitination and endoplasmic reticulum-associated degradation (ERAD) of CHRNA3. Within the complex UBXN2A acts as a scaffold protein required for the interaction of CHRNA3 with VCP/p97, this interaction also inhibits CHRNA3 ubiquitination by STUB1/CHIP and subsequently ERAD. Interacts with UBXN2A (via SEP domain), the interaction is required for the interaction of CHRNA3 in the STUB1:VCP:UBXN2A complex. Interacts with RIC3; which is required for proper folding and assembly. Interacts with LYPD6. Ubiquitinated; by STUB1/CHIP and thereafter degraded by the 26S proteosome complex. Expressed in the brain (at protein level).

It localises to the synaptic cell membrane. It is found in the cell membrane. The protein localises to the endoplasmic reticulum. Its subcellular location is the golgi apparatus. The catalysed reaction is K(+)(in) = K(+)(out). It catalyses the reaction Na(+)(in) = Na(+)(out). It carries out the reaction Ca(2+)(in) = Ca(2+)(out). Activated by a myriad of ligands such as acetylcholine, cytisine, nicotine, choline and epibatidine. The heteropentamer CHRNA3:CHRNB2 activity is blocked by alpha-conotoxins ImI, ImII, PnIA, GID and MII. The heteropentamer CHRNA3:CHRNB4 activity is blocked by the alpha-conotoxin ImI. Functionally, component of neuronal acetylcholine receptors (nAChRs) that function as pentameric, ligand-gated cation channels with high calcium permeability among other activities. nAChRs are excitatory neurotrasnmitter receptors formed by a collection of nAChR subunits known to mediate synaptic transmission in the nervous system and the neuromuscular junction. Each nAchR subunit confers differential attributes to channel properties, including activation, deactivation and desensitization kinetics, pH sensitivity, cation permeability, and binding to allosteric modulators. CHRNA3 forms heteropentameric neuronal acetylcholine receptors with CHRNA5, CHRNB2 and CHRNB4. CHRNA3:CHRNB4 being predominant in neurons of the autonomic ganglia, it is known as ganglionic nicotinic receptor. CHRNA3:CHRNB4 or CHRNA3:CHRNA5:CHRNB4 play also an important role in the habenulo-interpeduncular tract, modulating the mesolimbic dopamine system and affecting reward circuits and addiction. Hypothalamic CHRNA3:CHRNB4 nAChR activation by nicotine leads to activation of POMC neurons and a decrease in food intake. Also expressed in the urothelium where it modulates reflex bladder activity by increasing intracellular calcium through extracellular influx and basal ATP release. This is Neuronal acetylcholine receptor subunit alpha-3 (Chrna3) from Mus musculus (Mouse).